Reading from the N-terminus, the 374-residue chain is Ferroptosis suppressor protein 1 (374 aa).

The N-myristoyl glycine moiety is linked to residue G2. Residues 13–35 traverse the membrane as a helical segment; that stretch reads VVIVGGGFAGIAAATQLKSFGIP. 6-hydroxy-FAD contacts are provided by residues 17 to 21, R53, and V81; that span reads GGGFA. The residue at position 167 (K167) is an N6-acetyllysine. D285 lines the 6-hydroxy-FAD pocket.

Belongs to the FAD-dependent oxidoreductase family. It depends on 6-hydroxy-FAD as a cofactor. N-myristoylation at Gly-2 mediates the recruitment to lipid droplets and plasma membrane. In terms of processing, acetylation at Lys-167 prevents AIFM2 ubiquitination and degradation, thereby inhibiting ferroptosis. KAT2B mediates acetylation at Lys-167, while HDAC3 removes it. Post-translationally, ubiquitinated. AIFM2 undergoes 'Lys-29'-ubiquitination and proteasomal degradation, which is inhibited by acetylation at Lys-167.

It localises to the lipid droplet. It is found in the cell membrane. The protein localises to the cytoplasm. The protein resides in the mitochondrion membrane. Its subcellular location is the nucleus. It carries out the reaction ubiquinone-10 + NADH + H(+) = ubiquinol-10 + NAD(+). The catalysed reaction is phylloquinone + NADH + H(+) = phylloquinol + NAD(+). The enzyme catalyses menaquinone-4 + NADH + H(+) = menaquinol-4 + NAD(+). It catalyses the reaction menadione + NADH + H(+) = menadiol + NAD(+). With respect to regulation, the modification by 4-hydroxy-2-nonenal (HNE) adduction in mitochondria results in loss of the oxidoreductase activity and activation of a novel function in mitochondrial oxidative stress signaling. An NAD(P)H-dependent oxidoreductase that acts as a key inhibitor of ferroptosis. At the plasma membrane, catalyzes reduction of coenzyme Q/ubiquinone-10 to ubiquinol-10, a lipophilic radical-trapping antioxidant that prevents lipid oxidative damage and consequently ferroptosis. Acts in parallel to GPX4 to suppress phospholipid peroxidation and ferroptosis. This anti-ferroptotic function is independent of cellular glutathione levels. Also acts as a potent radical-trapping antioxidant by mediating warfarin-resistant vitamin K reduction in the canonical vitamin K cycle: catalyzes NAD(P)H-dependent reduction of vitamin K (phylloquinone, menaquinone-4 and menadione) to hydroquinone forms. Hydroquinones act as potent radical-trapping antioxidants inhibitor of phospholipid peroxidation and ferroptosis. May play a role in mitochondrial stress signaling. Upon oxidative stress, associates with the lipid peroxidation end product 4-hydroxy-2-nonenal (HNE) forming a lipid adduct devoid of oxidoreductase activity, which then translocates from mitochondria into the nucleus triggering DNA damage and cell death. The protein is Ferroptosis suppressor protein 1 (aifm2) of Xenopus tropicalis (Western clawed frog).